Reading from the N-terminus, the 154-residue chain is NADPH-dependent 7-cyano-7-deazaguanine reductase (154 aa).

The active-site Thioimide intermediate is Cys-52. The Proton donor role is filled by Asp-59. Substrate-binding positions include Val-74–Ser-76 and His-93–Glu-94.

Belongs to the GTP cyclohydrolase I family. QueF type 1 subfamily.

The protein localises to the cytoplasm. It catalyses the reaction 7-aminomethyl-7-carbaguanine + 2 NADP(+) = 7-cyano-7-deazaguanine + 2 NADPH + 3 H(+). It functions in the pathway tRNA modification; tRNA-queuosine biosynthesis. Functionally, catalyzes the NADPH-dependent reduction of 7-cyano-7-deazaguanine (preQ0) to 7-aminomethyl-7-deazaguanine (preQ1). The protein is NADPH-dependent 7-cyano-7-deazaguanine reductase of Sinorhizobium medicae (strain WSM419) (Ensifer medicae).